Reading from the N-terminus, the 43-residue chain is Defensin-A (43 aa).

Intrachain disulfides connect Cys-3–Cys-34, Cys-20–Cys-39, and Cys-24–Cys-41.

The protein localises to the secreted. Functionally, antibacterial protein. Strong activity against the Gram-positive bacteria M.luteus, B.megaterium and S.aureus. Reduced activity against Gram-positive bacterium B.subtilis and weak activity against Gram-negative bacterium X.japonicus. No detectable activity against the Gram-negative bacteria E.asbriae, E.coli, P.aeruginosa and S.marcescens. This Anomala cuprea (Cupreous chafer beetle) protein is Defensin-A.